The primary structure comprises 442 residues: Serine--tRNA ligase (442 aa).

249-251 contributes to the L-serine binding site; that stretch reads TSE. Residue 280-282 coordinates ATP; that stretch reads RSE. Residue Glu-303 coordinates L-serine. 367 to 370 provides a ligand contact to ATP; that stretch reads EISS. Ser-402 provides a ligand contact to L-serine.

Belongs to the class-II aminoacyl-tRNA synthetase family. Type-1 seryl-tRNA synthetase subfamily. Homodimer. The tRNA molecule binds across the dimer.

Its subcellular location is the cytoplasm. It catalyses the reaction tRNA(Ser) + L-serine + ATP = L-seryl-tRNA(Ser) + AMP + diphosphate + H(+). The catalysed reaction is tRNA(Sec) + L-serine + ATP = L-seryl-tRNA(Sec) + AMP + diphosphate + H(+). The protein operates within aminoacyl-tRNA biosynthesis; selenocysteinyl-tRNA(Sec) biosynthesis; L-seryl-tRNA(Sec) from L-serine and tRNA(Sec): step 1/1. In terms of biological role, catalyzes the attachment of serine to tRNA(Ser). Is also able to aminoacylate tRNA(Sec) with serine, to form the misacylated tRNA L-seryl-tRNA(Sec), which will be further converted into selenocysteinyl-tRNA(Sec). This chain is Serine--tRNA ligase, found in Acidovorax sp. (strain JS42).